Reading from the N-terminus, the 232-residue chain is MTNADPHELQKFSDLAHRWWDPNAEFKPLHDLNPVRLGWIDAHAHLAGKRALDIGCGGGILSESMAGLGAQVKGIDLSTEALGVADLHSLESGITVDYEAIAAEAIAAREPGTYDVVTCMEMLEHVPSPGDIVAACATLVKPGGWVFFSTLNRNLKAYLFAVIGAEYIAQMLPKGTHDYARFIRPSELAGFVRATDLHIVEIKGITYHPIGKRFALSNDTDINYLVACRRGA.

S-adenosyl-L-methionine-binding residues include Arg36, Gly55, Asp76, and Met120.

It belongs to the methyltransferase superfamily. UbiG/COQ3 family.

It carries out the reaction a 3-demethylubiquinol + S-adenosyl-L-methionine = a ubiquinol + S-adenosyl-L-homocysteine + H(+). It catalyses the reaction a 3-(all-trans-polyprenyl)benzene-1,2-diol + S-adenosyl-L-methionine = a 2-methoxy-6-(all-trans-polyprenyl)phenol + S-adenosyl-L-homocysteine + H(+). Its pathway is cofactor biosynthesis; ubiquinone biosynthesis. Its function is as follows. O-methyltransferase that catalyzes the 2 O-methylation steps in the ubiquinone biosynthetic pathway. This Burkholderia lata (strain ATCC 17760 / DSM 23089 / LMG 22485 / NCIMB 9086 / R18194 / 383) protein is Ubiquinone biosynthesis O-methyltransferase.